The primary structure comprises 67 residues: Beta-defensin 123 (67 aa).

The first 20 residues, M1–G20, serve as a signal peptide directing secretion. Disulfide bonds link C25–C52, C32–C46, and C36–C53.

Belongs to the beta-defensin family.

Its subcellular location is the secreted. In terms of biological role, has antibacterial activity. The polypeptide is Beta-defensin 123 (DEFB123) (Pongo pygmaeus (Bornean orangutan)).